Reading from the N-terminus, the 104-residue chain is NADH-quinone oxidoreductase subunit K (104 aa).

Transmembrane regions (helical) follow at residues 4 to 24 (VPAS…LFGA), 31 to 51 (VIVL…LVAF), and 67 to 87 (LFTM…LIAL).

The protein belongs to the complex I subunit 4L family. NDH-1 is composed of 14 different subunits. Subunits NuoA, H, J, K, L, M, N constitute the membrane sector of the complex.

Its subcellular location is the cell membrane. The catalysed reaction is a quinone + NADH + 5 H(+)(in) = a quinol + NAD(+) + 4 H(+)(out). In terms of biological role, NDH-1 shuttles electrons from NADH, via FMN and iron-sulfur (Fe-S) centers, to quinones in the respiratory chain. The immediate electron acceptor for the enzyme in this species is believed to be a menaquinone. Couples the redox reaction to proton translocation (for every two electrons transferred, four hydrogen ions are translocated across the cytoplasmic membrane), and thus conserves the redox energy in a proton gradient. In Bacillus cereus (strain AH187), this protein is NADH-quinone oxidoreductase subunit K.